Reading from the N-terminus, the 296-residue chain is Ceramide synthase LOH2 (296 aa).

Transmembrane regions (helical) follow at residues 19–39 (VWHF…RLVL), 80–100 (LLYY…EPWA), 121–141 (LYYM…LAWE), 158–178 (IILL…IILA), 206–226 (FALF…FWII), and 254–274 (MLLM…AMIV). In terms of domain architecture, TLC spans 71–278 (VKCKESLWKL…ICAMIVRLLK (208 aa)). Phosphoserine is present on residues Ser289 and Ser291.

As to expression, expressed ubiquitously with highest levels in pollen.

It is found in the endoplasmic reticulum membrane. The enzyme catalyses a sphingoid base + hexadecanoyl-CoA = an N-hexadecanoyl-sphingoid base + CoA + H(+). It carries out the reaction sphinganine + hexadecanoyl-CoA = N-hexadecanoylsphinganine + CoA + H(+). The catalysed reaction is sphing-4-enine + hexadecanoyl-CoA = N-hexadecanoylsphing-4-enine + CoA + H(+). It catalyses the reaction sphinga-(4E,8E)-dienine + hexadecanoyl-CoA = N-hexadecanoylsphinga-(4E,8E)-dienine + CoA + H(+). The enzyme catalyses sphinga-(4E,8Z)-dienine + hexadecanoyl-CoA = N-hexadecanoylsphinga-(4E,8Z)-dienine + CoA + H(+). It functions in the pathway sphingolipid metabolism. Inhibited by the mycotoxin fumonisin B(1), a sphingosine analog mycotoxins produced by pathogenic fungi. Activated by divalent cation such as magnesium Mg(2+), zinc Zn(2+), manganese Mn(2+) and calcium Ca(2+). Prevents cell division in root meristems and promotes salicylic acid (SA) production and hypersensitive response (HR). Catalyzes the biosynthesis of ceramide sphingolipids with C(16) fatty acids, structural membrane lipids involved in membrane trafficking (e.g. early endosomes) and cell polarity (e.g. polar auxin transport related proteins); accepts only C16:0 fatty acids, but with a wide range of d18 sphingoid bases, such as sphinganine (d18:0) and palmitoyl-CoA. Mediates resistance to sphinganine-analog mycotoxins (SAMs, e.g. fumonisin B(1)) by restoring the sphingolipid biosynthesis. Could salvage the transport of GPI-anchored proteins from the endoplasmic reticulum to the Golgi apparatus in ceramides-depleted cells after SAM exposure. Contributes to hypoxic conditions tolerance (e.g. submergences), especially in the dark, by promoting the formation of very-long-chain (VLC) ceramide species (22:1, 24:1 and 26:1) and of VLC unsaturated ceramides, which are modulating CTR1-mediated ethylene signaling leading to endoplasmic reticulum (ER)-to-nucleus translocation of EIN2 and EIN3. In Arabidopsis thaliana (Mouse-ear cress), this protein is Ceramide synthase LOH2.